The primary structure comprises 371 residues: Histidinol-phosphate aminotransferase (371 aa).

Position 222 is an N6-(pyridoxal phosphate)lysine (K222).

Belongs to the class-II pyridoxal-phosphate-dependent aminotransferase family. Histidinol-phosphate aminotransferase subfamily. Homodimer. It depends on pyridoxal 5'-phosphate as a cofactor.

It catalyses the reaction L-histidinol phosphate + 2-oxoglutarate = 3-(imidazol-4-yl)-2-oxopropyl phosphate + L-glutamate. Its pathway is amino-acid biosynthesis; L-histidine biosynthesis; L-histidine from 5-phospho-alpha-D-ribose 1-diphosphate: step 7/9. The chain is Histidinol-phosphate aminotransferase from Anoxybacillus flavithermus (strain DSM 21510 / WK1).